A 445-amino-acid polypeptide reads, in one-letter code: Phosphoglucosamine mutase (445 aa).

The Phosphoserine intermediate role is filled by S102. Residues S102, D241, D243, and D245 each coordinate Mg(2+). S102 is subject to Phosphoserine.

The protein belongs to the phosphohexose mutase family. Mg(2+) is required as a cofactor. Post-translationally, activated by phosphorylation.

The enzyme catalyses alpha-D-glucosamine 1-phosphate = D-glucosamine 6-phosphate. Its function is as follows. Catalyzes the conversion of glucosamine-6-phosphate to glucosamine-1-phosphate. In Haemophilus influenzae (strain 86-028NP), this protein is Phosphoglucosamine mutase.